A 354-amino-acid chain; its full sequence is MLHVGINGFGTIGKRVADAVRVQPDMTVAGVAKRSPNFEATIADDRGYDLYAADGREPFDEADLGTAGTVHDLIETSDVVVDTTPSGVGAANASLYAEHDTPAIFQGGEDADVADVSFNARANYEKAVGADTARVVSCNTTGLSRLLAPLRESYGVEKSRVTLVRRGADPGQTGRGPINDTLPDPVEIPSHHGPDVQTIFPDLDIDTMGMKVPTTQMHTHSVNVTLESEPATEEVTALLADESRLFLIPETLGIDGAGKLKEYTRDAGRPRGDVWENCIWAESITVEGRDLYLFQAIHQEADVVPENIDAVRALSERTASAEKSIRRTDEALGVGRGLVEHDGSPQRVDSHADD.

NAD(+) is bound by residues 11–12 (TI) and G108. Residue 137–139 (SCN) coordinates D-glyceraldehyde 3-phosphate. The Nucleophile role is filled by C138. R166 provides a ligand contact to NAD(+). Position 192 to 193 (192 to 193 (HG)) interacts with D-glyceraldehyde 3-phosphate. Q299 contacts NAD(+).

The protein belongs to the glyceraldehyde-3-phosphate dehydrogenase family. In terms of assembly, homotetramer.

It localises to the cytoplasm. The catalysed reaction is D-glyceraldehyde 3-phosphate + phosphate + NADP(+) = (2R)-3-phospho-glyceroyl phosphate + NADPH + H(+). It carries out the reaction D-glyceraldehyde 3-phosphate + phosphate + NAD(+) = (2R)-3-phospho-glyceroyl phosphate + NADH + H(+). The protein operates within carbohydrate degradation; glycolysis; pyruvate from D-glyceraldehyde 3-phosphate: step 1/5. The sequence is that of Glyceraldehyde-3-phosphate dehydrogenase from Haloarcula marismortui (strain ATCC 43049 / DSM 3752 / JCM 8966 / VKM B-1809) (Halobacterium marismortui).